Here is a 154-residue protein sequence, read N- to C-terminus: Interleukin-7 (154 aa).

An N-terminal signal peptide occupies residues 1-25 (MFHVSFRYIFGIPPLILVLLPVTSS). Intrachain disulfides connect Cys27-Cys145, Cys58-Cys133, and Cys71-Cys116. 2 N-linked (GlcNAc...) asparagine glycosylation sites follow: Asn94 and Asn115.

It belongs to the IL-7/IL-9 family. As to quaternary structure, interacts with IL7R and CSF2RG. In terms of processing, three disulfide bonds are present.

Its subcellular location is the secreted. Its function is as follows. Hematopoietic cytokine that plays an essential role in the development, expansion, and survival of naive and memory T-cells and B-cells thereby regulating the number of mature lymphocytes and maintaining lymphoid homeostasis. Mechanistically, exerts its biological effects through a receptor composed of IL7RA subunit and the cytokine receptor common subunit gamma/CSF2RG. Binding to the receptor leads to activation of various kinases including JAK1 or JAK3 depending on the cell type and subsequently propagation of signals through activation of several downstream signaling pathways including the PI3K/Akt/mTOR or the JAK-STAT5. The protein is Interleukin-7 (Il7) of Mus musculus (Mouse).